The sequence spans 76 residues: Conotoxin TsMLCL-03 (76 aa).

Residues Met-1–Pro-19 form the signal peptide. Positions Asn-20–Lys-44 are excised as a propeptide.

This sequence belongs to the conotoxin T superfamily. Contains 2 disulfide bonds that can be either 'C1-C3, C2-C4' or 'C1-C4, C2-C3', since these disulfide connectivities have been observed for conotoxins with cysteine framework V (for examples, see AC P0DQQ7 and AC P81755). In terms of tissue distribution, expressed by the venom duct.

The protein resides in the secreted. This Conus tessulatus (Tessellate cone) protein is Conotoxin TsMLCL-03.